The following is a 189-amino-acid chain: Small ribosomal subunit protein uS4 (189 aa).

The region spanning 107–181 (RRLQTQVFKL…VKRRTLRKGD (75 aa)) is the S4 RNA-binding domain. The segment at 161-189 (QSPYGGGRPGRVKRRTLRKGDGAGGDDEE) is disordered.

Belongs to the universal ribosomal protein uS4 family. Component of the small ribosomal subunit. Part of the small subunit (SSU) processome, composed of more than 70 proteins and the RNA chaperone small nucleolar RNA (snoRNA) U3.

It is found in the cytoplasm. It localises to the nucleus. The protein localises to the nucleolus. Functionally, component of the small ribosomal subunit. The ribosome is a large ribonucleoprotein complex responsible for the synthesis of proteins in the cell. Part of the small subunit (SSU) processome, first precursor of the small eukaryotic ribosomal subunit. During the assembly of the SSU processome in the nucleolus, many ribosome biogenesis factors, an RNA chaperone and ribosomal proteins associate with the nascent pre-rRNA and work in concert to generate RNA folding, modifications, rearrangements and cleavage as well as targeted degradation of pre-ribosomal RNA by the RNA exosome. The sequence is that of Small ribosomal subunit protein uS4 (rps-9) from Caenorhabditis elegans.